Reading from the N-terminus, the 83-residue chain is Cell division protein ZapB (83 aa).

Residues 7-80 (EMLEKLEAKV…RVRTLLGKMD (74 aa)) adopt a coiled-coil conformation.

Belongs to the ZapB family. In terms of assembly, homodimer. The ends of the coiled-coil dimer bind to each other, forming polymers. Interacts with FtsZ.

Its subcellular location is the cytoplasm. Non-essential, abundant cell division factor that is required for proper Z-ring formation. It is recruited early to the divisome by direct interaction with FtsZ, stimulating Z-ring assembly and thereby promoting cell division earlier in the cell cycle. Its recruitment to the Z-ring requires functional FtsA or ZipA. In Photobacterium profundum (strain SS9), this protein is Cell division protein ZapB.